A 440-amino-acid chain; its full sequence is UDP-N-acetylmuramoylalanine--D-glutamate ligase (440 aa).

Residue 112–118 (GSNGKST) participates in ATP binding.

It belongs to the MurCDEF family.

It is found in the cytoplasm. It carries out the reaction UDP-N-acetyl-alpha-D-muramoyl-L-alanine + D-glutamate + ATP = UDP-N-acetyl-alpha-D-muramoyl-L-alanyl-D-glutamate + ADP + phosphate + H(+). It functions in the pathway cell wall biogenesis; peptidoglycan biosynthesis. In terms of biological role, cell wall formation. Catalyzes the addition of glutamate to the nucleotide precursor UDP-N-acetylmuramoyl-L-alanine (UMA). This Blochmanniella pennsylvanica (strain BPEN) protein is UDP-N-acetylmuramoylalanine--D-glutamate ligase.